The sequence spans 444 residues: Transcriptional coactivator nsrH (444 aa).

One can recognise an HTH iclR-type domain in the interval 74 to 144; the sequence is ASQVSEILAC…ERDHVAHTPL (71 aa). A DNA-binding region (H-T-H motif) is located at residues 104 to 123; it reads IKDIADLTNVPESRLRRIIR.

It is found in the nucleus. Transcriptional coactivator; part of the gene cluster that mediates the biosynthesis of the tetrahydroxanthone dimer neosartorin, which exhibits antibacterial activity. This chain is Transcriptional coactivator nsrH, found in Aspergillus novofumigatus (strain IBT 16806).